The chain runs to 135 residues: CDGSH iron-sulfur domain-containing protein 2A (135 aa).

Topologically, residues 1–37 (MVLETISRIIKIQLPAYLKKLPLPETIGGFARLTVSE) are lumenal. A helical membrane pass occupies residues 38–60 (WLRLLPLLGILALLGYLTIRPFL). At 61 to 135 (PKKKKQKDSL…GPLILKKKIL (75 aa)) the chain is on the cytoplasmic side. The [2Fe-2S] cluster site is built by C99, C101, C110, and H114.

This sequence belongs to the CISD protein family. CISD2 subfamily. As to quaternary structure, homodimer. [2Fe-2S] cluster is required as a cofactor.

The protein resides in the endoplasmic reticulum membrane. Its subcellular location is the mitochondrion outer membrane. Functionally, regulator of autophagy that contributes to antagonize becn1-mediated cellular autophagy at the endoplasmic reticulum. Participates in the interaction of bcl2 with becn1 and is required for bcl2-mediated depression of endoplasmic reticulum Ca(2+) stores during autophagy. This chain is CDGSH iron-sulfur domain-containing protein 2A (cisd2a), found in Salmo salar (Atlantic salmon).